We begin with the raw amino-acid sequence, 299 residues long: uncharacterized protein (299 aa).

This is an uncharacterized protein from Acanthamoeba polyphaga mimivirus (APMV).